A 179-amino-acid polypeptide reads, in one-letter code: Cytochrome b6-f complex iron-sulfur subunit (179 aa).

A helical membrane pass occupies residues 21–43; the sequence is LLTFGTVTGVALGALYPVVKYFI. Residues 61 to 162 form the Rieske domain; that stretch reads GNDVSLSKFL…ANTVDDKIIL (102 aa). [2Fe-2S] cluster contacts are provided by C108, H110, C126, and H129. C113 and C128 form a disulfide bridge.

The protein belongs to the Rieske iron-sulfur protein family. The 4 large subunits of the cytochrome b6-f complex are cytochrome b6, subunit IV (17 kDa polypeptide, PetD), cytochrome f and the Rieske protein, while the 4 small subunits are PetG, PetL, PetM and PetN. The complex functions as a dimer. The cofactor is [2Fe-2S] cluster.

The protein localises to the cellular thylakoid membrane. It carries out the reaction 2 oxidized [plastocyanin] + a plastoquinol + 2 H(+)(in) = 2 reduced [plastocyanin] + a plastoquinone + 4 H(+)(out). Component of the cytochrome b6-f complex, which mediates electron transfer between photosystem II (PSII) and photosystem I (PSI), cyclic electron flow around PSI, and state transitions. This chain is Cytochrome b6-f complex iron-sulfur subunit, found in Desmonostoc sp. (strain PCC 7906) (Nostoc sp. (strain PCC 7906)).